Reading from the N-terminus, the 180-residue chain is Ribulose bisphosphate carboxylase small subunit, chloroplastic 3 (180 aa).

A chloroplast-targeting transit peptide spans 1-56 (MASSVMSSAAVATRGNGAQASMVAPFTGLKSTASFPVSRKQNLDITSIASNGGRVS).

Belongs to the RuBisCO small chain family. In terms of assembly, heterohexadecamer of 8 large and 8 small subunits. As to quaternary structure, (Microbial infection) Binds to tobamovirus movement protein; this interaction seems required for viral systemic movement.

The protein localises to the plastid. It is found in the chloroplast. Its subcellular location is the cell junction. The protein resides in the plasmodesma. Its function is as follows. RuBisCO catalyzes two reactions: the carboxylation of D-ribulose 1,5-bisphosphate, the primary event in carbon dioxide fixation, as well as the oxidative fragmentation of the pentose substrate. Both reactions occur simultaneously and in competition at the same active site. Although the small subunit is not catalytic it is essential for maximal activity. Involved in antiviral defenses. The chain is Ribulose bisphosphate carboxylase small subunit, chloroplastic 3 from Solanum lycopersicum (Tomato).